The sequence spans 170 residues: Small ribosomal subunit protein uS13 (170 aa).

Positions 128–140 are enriched in basic residues; the sequence is VRHKRGQKVRGQR. Residues 128–170 are disordered; it reads VRHKRGQKVRGQRTKSTGRTEGTIGVNVEAIKEEQAEDGGDEE.

This sequence belongs to the universal ribosomal protein uS13 family. As to quaternary structure, part of the 30S ribosomal subunit. Forms a loose heterodimer with protein S19. Forms two bridges to the 50S subunit in the 70S ribosome.

Functionally, located at the top of the head of the 30S subunit, it contacts several helices of the 16S rRNA. In the 70S ribosome it contacts the 23S rRNA (bridge B1a) and protein L5 of the 50S subunit (bridge B1b), connecting the 2 subunits; these bridges are implicated in subunit movement. This is Small ribosomal subunit protein uS13 from Natronomonas pharaonis (strain ATCC 35678 / DSM 2160 / CIP 103997 / JCM 8858 / NBRC 14720 / NCIMB 2260 / Gabara) (Halobacterium pharaonis).